The primary structure comprises 180 residues: Translation initiation factor IF-3 (180 aa).

Belongs to the IF-3 family. In terms of assembly, monomer.

Its subcellular location is the cytoplasm. IF-3 binds to the 30S ribosomal subunit and shifts the equilibrium between 70S ribosomes and their 50S and 30S subunits in favor of the free subunits, thus enhancing the availability of 30S subunits on which protein synthesis initiation begins. This Klebsiella pneumoniae protein is Translation initiation factor IF-3.